Reading from the N-terminus, the 179-residue chain is UPF0134 protein MPN_145 (179 aa).

This sequence belongs to the UPF0134 family.

This is UPF0134 protein MPN_145 from Mycoplasma pneumoniae (strain ATCC 29342 / M129 / Subtype 1) (Mycoplasmoides pneumoniae).